Reading from the N-terminus, the 150-residue chain is Cytosine deaminase (150 aa).

The region spanning 3–121 is the CMP/dCMP-type deaminase domain; sequence FDDKKGLQVA…KLLIENGVEV (119 aa). Asn44 provides a ligand contact to substrate. His55 contributes to the Zn(2+) binding site. Glu57 (proton donor) is an active-site residue. Zn(2+) contacts are provided by Cys84 and Cys87. Asp147 contacts substrate.

Belongs to the cytidine and deoxycytidylate deaminase family. In terms of assembly, homodimer. The cofactor is Zn(2+).

Its subcellular location is the cytoplasm. The protein resides in the nucleus. The enzyme catalyses cytosine + H2O + H(+) = uracil + NH4(+). It functions in the pathway pyrimidine metabolism; UMP biosynthesis via salvage pathway; uracil from cytosine: step 1/1. Functionally, catalyzes the hydrolytic deamination of cytosine to uracil or 5-methylcytosine to thymine. Is involved in the pyrimidine salvage pathway, which allows the cell to utilize cytosine for pyrimidine nucleotide synthesis. The protein is Cytosine deaminase of Candida albicans (strain SC5314 / ATCC MYA-2876) (Yeast).